The primary structure comprises 478 residues: Oxidative stress-induced growth inhibitor 1 (478 aa).

At serine 12 the chain carries Phosphoserine.

The protein belongs to the OKL38 family. Requires NADPH as cofactor.

The protein localises to the midbody. In terms of biological role, monooxygenase catalytic activity. Involved in regulation of cytokinesis; promotes RHOA activity, probably acting locally at the midbody in late cytokinesis. Monooxygenase activity is involved in stabilizing transient structures between daughter cells, termed intercellular bridges, before abscission. Regulates differentiation and proliferation through the regulation of cell death. The sequence is that of Oxidative stress-induced growth inhibitor 1 from Mus musculus (Mouse).